We begin with the raw amino-acid sequence, 277 residues long: Ribosomal RNA small subunit methyltransferase A (277 aa).

Asn-27, Leu-29, Gly-54, Glu-75, Asp-95, and Asn-118 together coordinate S-adenosyl-L-methionine.

Belongs to the class I-like SAM-binding methyltransferase superfamily. rRNA adenine N(6)-methyltransferase family. RsmA subfamily.

The protein resides in the cytoplasm. It carries out the reaction adenosine(1518)/adenosine(1519) in 16S rRNA + 4 S-adenosyl-L-methionine = N(6)-dimethyladenosine(1518)/N(6)-dimethyladenosine(1519) in 16S rRNA + 4 S-adenosyl-L-homocysteine + 4 H(+). Its function is as follows. Specifically dimethylates two adjacent adenosines (A1518 and A1519) in the loop of a conserved hairpin near the 3'-end of 16S rRNA in the 30S particle. May play a critical role in biogenesis of 30S subunits. In Chlamydia muridarum (strain MoPn / Nigg), this protein is Ribosomal RNA small subunit methyltransferase A.